A 791-amino-acid chain; its full sequence is Ubiquitin carboxyl-terminal hydrolase 10-A (791 aa).

Polar residues-rich tracts occupy residues 118-139 and 270-284; these read FSESSIPDGSGNADSDGTSGTG and DTTENLGVTNGQTLE. 2 disordered regions span residues 118 to 156 and 270 to 291; these read FSESSIPDGSGNADSDGTSGTGQRERKKKKKRPPGYYSY and DTTENLGVTNGQTLESPEEDTA. A USP domain is found at 408 to 788; it reads RGLINKGNWC…TAYLLYYRRV (381 aa). C417 acts as the Nucleophile in catalysis. Residues 560–580 are disordered; that stretch reads EVNKEEQEGSDEEWEQVGPRN. Catalysis depends on H742, which acts as the Proton acceptor.

Belongs to the peptidase C19 family. USP10 subfamily.

The protein localises to the cytoplasm. It localises to the nucleus. The enzyme catalyses Thiol-dependent hydrolysis of ester, thioester, amide, peptide and isopeptide bonds formed by the C-terminal Gly of ubiquitin (a 76-residue protein attached to proteins as an intracellular targeting signal).. Functionally, hydrolase that can remove conjugated ubiquitin from target proteins such as p53/tp53, rps2/us5, rps3/us3, rps10/eS10, becn1, snx3 and cftr. Acts as an essential regulator of p53/tp53 stability: in unstressed cells, specifically deubiquitinates p53/tp53 in the cytoplasm, leading to counteracts MDM2 action and stabilize p53/tp53. Following DNA damage, translocates to the nucleus and deubiquitinates p53/tp53, leading to regulate the p53/TP53-dependent DNA damage response. Component of a regulatory loop that controls autophagy and p53/tp53 levels. Plays a key role in 40S ribosome subunit recycling when a ribosome has stalled during translation: acts both by inhibiting formation of stress granules, which store stalled translation pre-initiation complexes, and mediating deubiquitination of 40S ribosome subunits. Deubiquitinates cftr in early endosomes, enhancing its endocytic recycling. This is Ubiquitin carboxyl-terminal hydrolase 10-A (usp10-a) from Xenopus laevis (African clawed frog).